The chain runs to 869 residues: Protein translocase subunit SecA (869 aa).

ATP contacts are provided by residues Q85, 103 to 107 (GEGKT), and D508.

The protein belongs to the SecA family. In terms of assembly, monomer and homodimer. Part of the essential Sec protein translocation apparatus which comprises SecA, SecYEG and auxiliary proteins SecDF. Other proteins may also be involved.

Its subcellular location is the cell membrane. The protein localises to the cytoplasm. It catalyses the reaction ATP + H2O + cellular proteinSide 1 = ADP + phosphate + cellular proteinSide 2.. Its function is as follows. Part of the Sec protein translocase complex. Interacts with the SecYEG preprotein conducting channel. Has a central role in coupling the hydrolysis of ATP to the transfer of proteins into and across the cell membrane, serving as an ATP-driven molecular motor driving the stepwise translocation of polypeptide chains across the membrane. The sequence is that of Protein translocase subunit SecA from Deinococcus geothermalis (strain DSM 11300 / CIP 105573 / AG-3a).